We begin with the raw amino-acid sequence, 364 residues long: Spermidine/putrescine import ATP-binding protein PotA (364 aa).

In terms of domain architecture, ABC transporter spans 5–235 (LSFKSVSKQY…PVNRFVADFI (231 aa)). 37 to 44 (GPSGCGKT) contributes to the ATP binding site.

It belongs to the ABC transporter superfamily. Spermidine/putrescine importer (TC 3.A.1.11.1) family. As to quaternary structure, the complex is composed of two ATP-binding proteins (PotA), two transmembrane proteins (PotB and PotC) and a solute-binding protein (PotD).

It is found in the cell membrane. It carries out the reaction ATP + H2O + polyamine-[polyamine-binding protein]Side 1 = ADP + phosphate + polyamineSide 2 + [polyamine-binding protein]Side 1.. Part of the ABC transporter complex PotABCD involved in spermidine/putrescine import. Responsible for energy coupling to the transport system. The protein is Spermidine/putrescine import ATP-binding protein PotA of Staphylococcus saprophyticus subsp. saprophyticus (strain ATCC 15305 / DSM 20229 / NCIMB 8711 / NCTC 7292 / S-41).